A 210-amino-acid chain; its full sequence is Synaptosomal-associated protein 23 (210 aa).

An N-acetylmethionine modification is found at methionine 1. Phosphoserine occurs at positions 5, 20, 23, and 34. The region spanning 14–76 is the t-SNARE coiled-coil homology 1 domain; it reads HQVTDESLES…REAEKTLTEL (63 aa). A coiled-coil region spans residues 23–76; that stretch reads STRRILGLAIESQDAGIKTITMLDEQGEQLNRIEEGMDQINKDMREAEKTLTEL. S-palmitoyl cysteine attachment occurs at residues cysteine 79, cysteine 80, cysteine 83, cysteine 85, and cysteine 87. A disordered region spans residues 104-136; it reads GDGGDSSPSNVVSKQPSRITNGQPQQTTGAASG. The span at 109 to 133 shows a compositional bias: polar residues; it reads SSPSNVVSKQPSRITNGQPQQTTGA. A phosphoserine mark is found at serine 110 and serine 160. The 63-residue stretch at 145-207 folds into the t-SNARE coiled-coil homology 2 domain; that stretch reads DAREDEMEEN…DIANTRAKKL (63 aa).

This sequence belongs to the SNAP-25 family. Homotetramer (via coiled-coil domain), also forms heterotetramers with STX4 and VAMP3. Found in a complex with VAMP8 and STX1A. Found in a complex with VAMP8 and STX4 in pancreas. Interacts simultaneously with SNAPIN and SYN4. Interacts with STX1A. Interacts with STX12. Interacts tightly to multiple syntaxins and synaptobrevins/VAMPs. Interacts with ZDHHC13 (via ANK repeats). Interacts with ZDHHC17 (via ANK repeats).

It is found in the cell membrane. It localises to the synapse. Its subcellular location is the synaptosome. The protein localises to the cytoplasmic vesicle membrane. Essential component of the high affinity receptor for the general membrane fusion machinery and an important regulator of transport vesicle docking and fusion. This is Synaptosomal-associated protein 23 (Snap23) from Rattus norvegicus (Rat).